The chain runs to 207 residues: Cytidylyl-2-hydroxypropylphosphonate hydrolase (207 aa).

CDP contacts are provided by Trp68, Arg74, Gln76, and Ser77. 4 residues coordinate a divalent metal cation: Asn109, Asp125, Glu127, and Asp129. Lys142 provides a ligand contact to CDP. The active-site Proton donor is Lys142. Position 143 (Asp143) interacts with a divalent metal cation.

The protein belongs to the FomD family. Mn(2+) is required as a cofactor. The cofactor is Co(2+).

It carries out the reaction cytidine 5'-({hydroxy[(S)-2-hydroxypropyl]phosphonoyl}phosphate) + H2O = (S)-2-hydroxypropylphosphonate + CMP + H(+). Its pathway is antibiotic biosynthesis; fosfomycin biosynthesis. Its activity is regulated as follows. Hydrolysis of (S)-HPP-CMP is inhibited by CDP. In terms of biological role, involved in fosfomycin biosynthesis. Catalyzes the hydrolysis of cytidylyl (S)-2-hydroxypropylphosphonate ((S)-HPP-CMP) to give (S)-2-hydroxypropylphosphonate ((S)-HPP) and CMP. Can also hydrolyze (R)-HPP-CMP and cytidylyl 2-hydroxyethylphosphonate (HEP-CMP), which is a biosynthetic intermediate before C-methylation, but the catalytic efficiency is much higher with (S)-HPP-CMP. In Streptomyces fradiae (Streptomyces roseoflavus), this protein is Cytidylyl-2-hydroxypropylphosphonate hydrolase.